The following is a 206-amino-acid chain: Protein Ta0236 (206 aa).

The AMMECR1 domain occupies 16–205 (DIGTKAVRLA…EKDPEGVVEK (190 aa)).

The sequence is that of Protein Ta0236 from Thermoplasma acidophilum (strain ATCC 25905 / DSM 1728 / JCM 9062 / NBRC 15155 / AMRC-C165).